A 102-amino-acid chain; its full sequence is Small ribosomal subunit protein uS10 (102 aa).

It belongs to the universal ribosomal protein uS10 family. Part of the 30S ribosomal subunit.

Functionally, involved in the binding of tRNA to the ribosomes. The chain is Small ribosomal subunit protein uS10 from Thermobifida fusca (strain YX).